The sequence spans 397 residues: Elongation factor Tu (397 aa).

Residues 10–206 (KPHVNIGTIG…AVDSYIPTPE (197 aa)) enclose the tr-type G domain. A G1 region spans residues 19 to 26 (GHVDHGKT). 19 to 26 (GHVDHGKT) is a binding site for GTP. Thr-26 contributes to the Mg(2+) binding site. The G2 stretch occupies residues 60-64 (GITIN). Positions 81–84 (DCPG) are G3. GTP contacts are provided by residues 81–85 (DCPGH) and 136–139 (NKAD). The G4 stretch occupies residues 136–139 (NKAD). The segment at 174–176 (SAL) is G5.

The protein belongs to the TRAFAC class translation factor GTPase superfamily. Classic translation factor GTPase family. EF-Tu/EF-1A subfamily. In terms of assembly, monomer.

It localises to the cytoplasm. The enzyme catalyses GTP + H2O = GDP + phosphate + H(+). Functionally, GTP hydrolase that promotes the GTP-dependent binding of aminoacyl-tRNA to the A-site of ribosomes during protein biosynthesis. The chain is Elongation factor Tu from Clostridium perfringens (strain ATCC 13124 / DSM 756 / JCM 1290 / NCIMB 6125 / NCTC 8237 / Type A).